The primary structure comprises 141 residues: Hemoglobin subunit alpha (141 aa).

Residues 1–141 (VLSPADKSNV…VSTVLTSKYR (141 aa)) form the Globin domain. Phosphoserine is present on Ser3. Residues Lys7 and Lys11 each carry the N6-succinyllysine modification. Residue Lys16 is modified to N6-acetyllysine; alternate. Residue Lys16 is modified to N6-succinyllysine; alternate. Tyr24 bears the Phosphotyrosine mark. The residue at position 35 (Ser35) is a Phosphoserine. Lys40 carries the N6-succinyllysine modification. Ser49 carries the post-translational modification Phosphoserine. An O2-binding site is contributed by His58. His87 is a heme b binding site. The residue at position 102 (Ser102) is a Phosphoserine. Thr108 is modified (phosphothreonine). A phosphoserine mark is found at Ser124 and Ser131. Residues Thr134 and Thr137 each carry the phosphothreonine modification. Residue Ser138 is modified to Phosphoserine.

It belongs to the globin family. In terms of assembly, heterotetramer of two alpha chains and two beta chains. As to expression, red blood cells.

Involved in oxygen transport from the lung to the various peripheral tissues. Its function is as follows. Hemopressin acts as an antagonist peptide of the cannabinoid receptor CNR1. Hemopressin-binding efficiently blocks cannabinoid receptor CNR1 and subsequent signaling. This chain is Hemoglobin subunit alpha (HBA), found in Saguinus mystax (Moustached tamarin).